Reading from the N-terminus, the 166-residue chain is Ribosome maturation factor RimM (166 aa).

The 75-residue stretch at 91–165 (DDEFYHADLI…RIVADPPEGL (75 aa)) folds into the PRC barrel domain.

This sequence belongs to the RimM family. Binds ribosomal protein uS19.

The protein localises to the cytoplasm. Its function is as follows. An accessory protein needed during the final step in the assembly of 30S ribosomal subunit, possibly for assembly of the head region. Essential for efficient processing of 16S rRNA. May be needed both before and after RbfA during the maturation of 16S rRNA. It has affinity for free ribosomal 30S subunits but not for 70S ribosomes. The sequence is that of Ribosome maturation factor RimM from Dinoroseobacter shibae (strain DSM 16493 / NCIMB 14021 / DFL 12).